The primary structure comprises 851 residues: DEAD-box ATP-dependent RNA helicase 29 (851 aa).

The interval 1 to 49 (MARLNPSKPSSRGGKPRSSSADAMAEHKPPPGRPKREGEGASKKKAKSG) is disordered. Positions 7-20 (SKPSSRGGKPRSSS) are enriched in low complexity. Positions 24–42 (MAEHKPPPGRPKREGEGAS) are enriched in basic and acidic residues. The Q motif signature appears at 49–77 (GGFESMGLCEEVYRGVRHKGYRVPTPIQR). One can recognise a Helicase ATP-binding domain in the interval 80–253 (MPLILAGHDI…KAGLRDPQIV (174 aa)). 93–100 (ARTGSGKT) serves as a coordination point for ATP. Positions 201-204 (DEAD) match the DEAD box motif. One can recognise a Helicase C-terminal domain in the interval 277 to 426 (KLAALLYLVR…PAPTEEELLK (150 aa)). Residues 702-851 (KWQQKTHRSI…KGKMKGKGTR (150 aa)) form a disordered region. A compositionally biased stretch (basic residues) spans 733–746 (RGNRKHTAAGRGRR). Basic and acidic residues-rich tracts occupy residues 773-787 (DIAR…ESKF) and 796-825 (RHDG…DGNG). Over residues 841 to 851 (GKGKMKGKGTR) the composition is skewed to basic residues.

The protein belongs to the DEAD box helicase family. DDX54/DBP10 subfamily.

The enzyme catalyses ATP + H2O = ADP + phosphate + H(+). The sequence is that of DEAD-box ATP-dependent RNA helicase 29 from Oryza sativa subsp. indica (Rice).